A 239-amino-acid polypeptide reads, in one-letter code: Ribosomal RNA small subunit methyltransferase G (239 aa).

S-adenosyl-L-methionine contacts are provided by residues Gly78, Phe83, Ala129–Glu130, and Arg148.

This sequence belongs to the methyltransferase superfamily. RNA methyltransferase RsmG family.

The protein localises to the cytoplasm. Its function is as follows. Specifically methylates the N7 position of a guanine in 16S rRNA. The chain is Ribosomal RNA small subunit methyltransferase G from Clostridium beijerinckii (strain ATCC 51743 / NCIMB 8052) (Clostridium acetobutylicum).